Here is a 209-residue protein sequence, read N- to C-terminus: Probable chalcone--flavanone isomerase 3 (209 aa).

It belongs to the chalcone isomerase family.

It carries out the reaction a chalcone = a flavanone.. The protein operates within secondary metabolite biosynthesis; flavonoid biosynthesis. Its function is as follows. Involved in anthocyanin biosynthesis. The chain is Probable chalcone--flavanone isomerase 3 (CHI3) from Arabidopsis thaliana (Mouse-ear cress).